The primary structure comprises 86 residues: Immunity protein CdiI-1 (86 aa).

Interacts with the C-terminal fragment (CT) of cognate toxin protein CdiA-EC869.

Functionally, immunity protein component of a toxin-immunity protein module, which functions as a cellular contact-dependent growth inhibition (CDI) system. CDI modules allow bacteria to communicate with and inhibit the growth of closely related neighboring bacteria in a contact-dependent fashion. Neutralizes the toxic activity of cognate toxin CdiA-EC869 (the C-terminal 289 residue CT fragment). Does not inhibit toxic activity of CdiA from other toxin-immunity modules or strains of E.coli. The protein is Immunity protein CdiI-1 of Escherichia coli O157:H7 (strain EC869).